We begin with the raw amino-acid sequence, 296 residues long: Biliverdin reductase A (296 aa).

Residues 1-2 (MN) constitute a propeptide that is removed on maturation. Residues 16 to 19 (VGRA), 44 to 46 (SRR), 77 to 80 (SSSH), and tyrosine 98 contribute to the NADP(+) site. Threonine 174 bears the Phosphothreonine mark. Phosphoserine is present on residues serine 178 and serine 230. Lysine 248 and lysine 253 each carry N6-acetyllysine. Residues histidine 280, cysteine 281, cysteine 292, and cysteine 293 each contribute to the Zn(2+) site.

Belongs to the Gfo/Idh/MocA family. Biliverdin reductase subfamily. Monomer. Requires Zn(2+) as cofactor. Liver.

Its subcellular location is the cytoplasm. The protein localises to the cytosol. The enzyme catalyses (4Z,15Z)-bilirubin IXalpha + NAD(+) = biliverdin IXalpha + NADH + H(+). It carries out the reaction (4Z,15Z)-bilirubin IXalpha + NADP(+) = biliverdin IXalpha + NADPH + H(+). It functions in the pathway porphyrin-containing compound metabolism; protoheme degradation. In terms of biological role, reduces the gamma-methene bridge of the open tetrapyrrole, biliverdin IXalpha, to bilirubin with the concomitant oxidation of a NADH or NADPH cofactor. Does not reduce bilirubin IXbeta. Uses the reactants NADH or NADPH depending on the pH; NADH is used at the acidic pH range (6-6.9) and NADPH at the alkaline range (8.5-8.7). NADPH, however, is the probable reactant in biological systems. The sequence is that of Biliverdin reductase A from Homo sapiens (Human).